The primary structure comprises 95 residues: Costars family protein At4g33640 (95 aa).

Met1 carries the post-translational modification N-acetylmethionine.

This sequence belongs to the costars family.

In Arabidopsis thaliana (Mouse-ear cress), this protein is Costars family protein At4g33640.